Consider the following 187-residue polypeptide: Elongation factor P (187 aa).

It belongs to the elongation factor P family.

Its subcellular location is the cytoplasm. The protein operates within protein biosynthesis; polypeptide chain elongation. Involved in peptide bond synthesis. Stimulates efficient translation and peptide-bond synthesis on native or reconstituted 70S ribosomes in vitro. Probably functions indirectly by altering the affinity of the ribosome for aminoacyl-tRNA, thus increasing their reactivity as acceptors for peptidyl transferase. The chain is Elongation factor P from Parvibaculum lavamentivorans (strain DS-1 / DSM 13023 / NCIMB 13966).